Reading from the N-terminus, the 335-residue chain is MILGIESSCDDSSIALMDIDNFELKKYKKITQENEHSKFGGVVPELAARLHTAAIPNLIEDVKEFFTSIKAVAVTNEPGLSVSLISGVSAARALSLALGIPLIGVNHLIGHIYSLFLDKNVVLPLGVLLVSGGHTMVLNIDESGYIKLIATTSDDSFGESFDKVAKMMDLGYPGGAIIEKLALSGDKNRFNFTVPLKHDKRLEYSFSGLKNQVRTQISKFESLSLQDKSDIASSFQYTAISHITDKLEKIFSEYKFKNFGAIGGGSANQVLRSNLEQICEKFGSNLMFAPLKFCSDNAAMIARAGVCKYKNKCFTKPLDMSINPRCKLDGANLYF.

Fe cation-binding residues include His-107 and His-111. Substrate-binding positions include 129–133 (LVSGG), Asp-162, Gly-175, and Asn-268. Residue Asp-296 participates in Fe cation binding.

It belongs to the KAE1 / TsaD family. Fe(2+) serves as cofactor.

It is found in the cytoplasm. It catalyses the reaction L-threonylcarbamoyladenylate + adenosine(37) in tRNA = N(6)-L-threonylcarbamoyladenosine(37) in tRNA + AMP + H(+). In terms of biological role, required for the formation of a threonylcarbamoyl group on adenosine at position 37 (t(6)A37) in tRNAs that read codons beginning with adenine. Is involved in the transfer of the threonylcarbamoyl moiety of threonylcarbamoyl-AMP (TC-AMP) to the N6 group of A37, together with TsaE and TsaB. TsaD likely plays a direct catalytic role in this reaction. The protein is tRNA N6-adenosine threonylcarbamoyltransferase of Campylobacter fetus subsp. fetus (strain 82-40).